A 213-amino-acid polypeptide reads, in one-letter code: Ras-related protein Rab-2 (213 aa).

Residues Thr-15, Gly-16, Gly-18, Lys-19, Ser-20, Cys-21, Gln-32, Pro-33, His-35, Thr-38, Gly-64, Asn-119, Asp-122, and Ala-150 each coordinate GTP. A Mg(2+)-binding site is contributed by Ser-20. Mg(2+) is bound at residue Thr-38. Positions 190 to 213 are disordered; that stretch reads QHSPTNPSLPGAGGAAGAANSGCC. S-geranylgeranyl cysteine attachment occurs at residues Cys-212 and Cys-213.

Belongs to the small GTPase superfamily. Rab family. As to quaternary structure, interacts (GTP-bound form) with Vps16A and Vps39; the interaction with Vps39 is probably direct.

Its subcellular location is the vesicle. The protein resides in the cytoplasmic vesicle. It localises to the cell projection. It is found in the axon. The protein localises to the presynapse. Its subcellular location is the presynaptic active zone. The protein resides in the golgi apparatus. It localises to the trans-Golgi network. It is found in the perikaryon. The protein localises to the autophagosome membrane. Its subcellular location is the autolysosome membrane. It catalyses the reaction GTP + H2O = GDP + phosphate + H(+). In terms of biological role, may be involved in bidirectional endoplasmic reticulum (ER) to Golgi trafficking. Together with Rab7 involved in promoting fusion of autophagosomes and endosomes with lysosomes, probably through recruitment of the HOPS tethering complex. Involved in biosynthetic transport to lysosomes. In larval motor neurons, mediates the biogenesis of presynaptic cargo vesicles and their long-range axonal trafficking to synaptic termini. Not involved in axonal trafficking of mitochondria. During vesicle biogenesis, active zone proteins (including brp/Bruchpilot) and synaptic vesicle proteins (including VGlut) are sorted from the trans-Golgi in a Rab2-dependent manner via, at least, two independent routes. Acts upstream of Arl8 during presynaptic precursor vesicle biogenesis. Associated with lysosomal marker positive presynaptic cargo vesicles during anterograde and retrograde axonal trafficking, probably while in its GTP-bound active state. Involved in the delivery of presynaptic cargos, but not presynapse assembly or active zone function at synaptic termini. Required for autophagocytosis-dependent remodeling of myofibrils and transverse-tubules (T-tubules) during metamorphosis. The polypeptide is Ras-related protein Rab-2 (Drosophila melanogaster (Fruit fly)).